The chain runs to 519 residues: MWPLRFNNRFIAVLPCDPEVSLRSRQVLEAWSGVAPTPVPVPCLLAYSSEVAAILNFDAEELVTPRFVEVFSGNALYPGMQPYAVNYGGHQFGQWVGQLGDGRVITLGELLGADGVYYELQLKGAGPTPYSRGADGRAVLRSSIREFLCSEAMHHLGIPTTRALSLIATGDTVIRDMLYDGHPAPEPSAIVCRVAPSFVRFGTFELPASRGDIDLLRRLVEFTIMRDYPHLHGAGETLYVDWFAEICTRTAELVAHWMRVGFVHGVMNTDNMSILGLTIDYGPYGWIDNNDLDWTPNVTDAQSRRYRFGAQPQVAYWNLGCLARALAPLFSDAASLQAGLERFRATYLAAERRDAAAKLGFAACFDEDLELFDALRTCMHQAEMDMTLTFLGLADWEPNMPDSLSLWAEAFYDPVKRDAQAPMLRDWLQRYAARLSVDPLPVAERHERMRLANPRYVLRNYLTQQAIECAEQGDLIELHALLEVMRRPYDFQLGREAYAMRRPEWARSRIGCSMLSCSS.

The ATP site is built by glycine 100, glycine 102, arginine 103, lysine 123, aspartate 135, glycine 136, arginine 193, and arginine 200. Residue aspartate 270 is the Proton acceptor of the active site. Residues asparagine 271 and aspartate 280 each coordinate Mg(2+). Aspartate 280 is a binding site for ATP.

Belongs to the SELO family. Requires Mg(2+) as cofactor. It depends on Mn(2+) as a cofactor.

The catalysed reaction is L-seryl-[protein] + ATP = 3-O-(5'-adenylyl)-L-seryl-[protein] + diphosphate. The enzyme catalyses L-threonyl-[protein] + ATP = 3-O-(5'-adenylyl)-L-threonyl-[protein] + diphosphate. It carries out the reaction L-tyrosyl-[protein] + ATP = O-(5'-adenylyl)-L-tyrosyl-[protein] + diphosphate. It catalyses the reaction L-histidyl-[protein] + UTP = N(tele)-(5'-uridylyl)-L-histidyl-[protein] + diphosphate. The catalysed reaction is L-seryl-[protein] + UTP = O-(5'-uridylyl)-L-seryl-[protein] + diphosphate. The enzyme catalyses L-tyrosyl-[protein] + UTP = O-(5'-uridylyl)-L-tyrosyl-[protein] + diphosphate. Nucleotidyltransferase involved in the post-translational modification of proteins. It can catalyze the addition of adenosine monophosphate (AMP) or uridine monophosphate (UMP) to a protein, resulting in modifications known as AMPylation and UMPylation. This chain is Protein nucleotidyltransferase YdiU, found in Xylella fastidiosa (strain 9a5c).